A 795-amino-acid polypeptide reads, in one-letter code: Probable alpha,alpha-trehalose-phosphate synthase [UDP-forming] 4 (795 aa).

A glycosyltransferase region spans residues 4-469 (PRLLVVSMSL…WADDFMKLTL (466 aa)).

The protein in the N-terminal section; belongs to the glycosyltransferase 20 family. It in the C-terminal section; belongs to the trehalose phosphatase family.

It catalyses the reaction D-glucose 6-phosphate + UDP-alpha-D-glucose = alpha,alpha-trehalose 6-phosphate + UDP + H(+). The chain is Probable alpha,alpha-trehalose-phosphate synthase [UDP-forming] 4 (TPS4) from Arabidopsis thaliana (Mouse-ear cress).